The sequence spans 156 residues: Small ribosomal subunit protein uS7 (156 aa).

It belongs to the universal ribosomal protein uS7 family. Part of the 30S ribosomal subunit. Contacts proteins S9 and S11.

One of the primary rRNA binding proteins, it binds directly to 16S rRNA where it nucleates assembly of the head domain of the 30S subunit. Is located at the subunit interface close to the decoding center, probably blocks exit of the E-site tRNA. The chain is Small ribosomal subunit protein uS7 from Solidesulfovibrio magneticus (strain ATCC 700980 / DSM 13731 / RS-1) (Desulfovibrio magneticus).